The chain runs to 389 residues: Acetylornithine aminotransferase (389 aa).

Residues glycine 96–threonine 97 and phenylalanine 123 each bind pyridoxal 5'-phosphate. Arginine 126 is a N(2)-acetyl-L-ornithine binding site. Aspartate 207–glutamine 210 serves as a coordination point for pyridoxal 5'-phosphate. Lysine 236 bears the N6-(pyridoxal phosphate)lysine mark. Position 264 (serine 264) interacts with N(2)-acetyl-L-ornithine. Threonine 265 contributes to the pyridoxal 5'-phosphate binding site.

It belongs to the class-III pyridoxal-phosphate-dependent aminotransferase family. ArgD subfamily. Homodimer. Requires pyridoxal 5'-phosphate as cofactor.

The protein localises to the cytoplasm. It catalyses the reaction N(2)-acetyl-L-ornithine + 2-oxoglutarate = N-acetyl-L-glutamate 5-semialdehyde + L-glutamate. The protein operates within amino-acid biosynthesis; L-arginine biosynthesis; N(2)-acetyl-L-ornithine from L-glutamate: step 4/4. The protein is Acetylornithine aminotransferase of Lactiplantibacillus plantarum (strain ATCC BAA-793 / NCIMB 8826 / WCFS1) (Lactobacillus plantarum).